The primary structure comprises 535 residues: CTP synthase (535 aa).

Residues Met1–Leu267 are amidoligase domain. Ser13 is a CTP binding site. Residue Ser13 participates in UTP binding. Position 14-19 (Ser14–Ile19) interacts with ATP. Tyr54 is an L-glutamine binding site. Asp71 lines the ATP pocket. Asp71 and Glu141 together coordinate Mg(2+). CTP is bound by residues Asp148–Glu150, Lys188–Gln193, and Lys224. UTP is bound by residues Lys188–Gln193 and Lys224. Positions Arg292–Ser534 constitute a Glutamine amidotransferase type-1 domain. Residue Gly354 coordinates L-glutamine. Cys381 acts as the Nucleophile; for glutamine hydrolysis in catalysis. Residues Leu382–Gln385, Glu405, and Arg462 each bind L-glutamine. Catalysis depends on residues His507 and Glu509.

This sequence belongs to the CTP synthase family. As to quaternary structure, homotetramer.

The enzyme catalyses UTP + L-glutamine + ATP + H2O = CTP + L-glutamate + ADP + phosphate + 2 H(+). The catalysed reaction is L-glutamine + H2O = L-glutamate + NH4(+). It catalyses the reaction UTP + NH4(+) + ATP = CTP + ADP + phosphate + 2 H(+). Its pathway is pyrimidine metabolism; CTP biosynthesis via de novo pathway; CTP from UDP: step 2/2. Allosterically activated by GTP, when glutamine is the substrate; GTP has no effect on the reaction when ammonia is the substrate. The allosteric effector GTP functions by stabilizing the protein conformation that binds the tetrahedral intermediate(s) formed during glutamine hydrolysis. Inhibited by the product CTP, via allosteric rather than competitive inhibition. Catalyzes the ATP-dependent amination of UTP to CTP with either L-glutamine or ammonia as the source of nitrogen. Regulates intracellular CTP levels through interactions with the four ribonucleotide triphosphates. This is CTP synthase from Bacillus cytotoxicus (strain DSM 22905 / CIP 110041 / 391-98 / NVH 391-98).